The chain runs to 744 residues: 4'-phospho-dehydrooxetanocin synthase (744 aa).

The B12-binding domain occupies 119 to 259; the sequence is TVTLVNLCVI…KMLKKELKLD (141 aa). Arg-135, Ser-139, Ser-184, Gly-241, Glu-242, and Glu-308 together coordinate cob(II)alamin. A Radical SAM core domain is found at 299-545; that stretch reads SKFRGALTLE…IVSYMLASME (247 aa). Positions 313, 318, and 321 each coordinate [4Fe-4S] cluster. Cob(II)alamin contacts are provided by Pro-322, His-325, Lys-326, Ala-361, and Glu-363. S-adenosyl-L-methionine-binding residues include Glu-436 and Glu-545.

Belongs to the radical SAM superfamily. Requires [4Fe-4S] cluster as cofactor. Cob(II)alamin serves as cofactor.

The enzyme catalyses dAMP + S-adenosyl-L-methionine = 4'-phospho-dehydrooxetanocin + 5'-deoxyadenosine + L-methionine + H(+). The catalysed reaction is AH2 + 2 S-adenosyl-L-methionine = 2 5'-deoxyadenosin-5'-yl radical + 2 L-methionine + A + 2 H(+). It catalyses the reaction 2 5'-deoxyadenosin-5'-yl radical + 2 dAMP + A = 2 4'-phospho-dehydrooxetanocin + 2 5'-deoxyadenosine + AH2. With respect to regulation, requires OxsA for the oxidative ring contraction activity. Activation of OxsB requires its direct interaction with OxsA and is independent of OxsA phosphohydrolase activity. In contrast to ring contraction, methylation does not require the presence of OxsA. Functionally, isomerase involved in the biosynthesis of oxetanocin A (OXT-A), a nucleoside analog with antitumor, antiviral and antibacterial properties. Catalyzes an oxidative ring contraction of dAMP, forming an oxetane aldehyde. In addition, shows methyltransferase activity in vitro and is able to catalyze the radical mediated, stereoselective C2'-methylation of dAMP to form methylated 2'-dAMP. Also catalyzes the demethylation of S-adenosyl-L-methionine (SAM) to S-adenosyl-L-homocysteine (SAH). This chain is 4'-phospho-dehydrooxetanocin synthase, found in Priestia megaterium (Bacillus megaterium).